A 291-amino-acid polypeptide reads, in one-letter code: NAD kinase (291 aa).

The active-site Proton acceptor is Asp-73. NAD(+) contacts are provided by residues 73 to 74 (DG), 147 to 148 (ND), Arg-175, Asp-177, and Gln-246.

Belongs to the NAD kinase family. The cofactor is a divalent metal cation.

The protein localises to the cytoplasm. The enzyme catalyses NAD(+) + ATP = ADP + NADP(+) + H(+). Functionally, involved in the regulation of the intracellular balance of NAD and NADP, and is a key enzyme in the biosynthesis of NADP. Catalyzes specifically the phosphorylation on 2'-hydroxyl of the adenosine moiety of NAD to yield NADP. This chain is NAD kinase, found in Chromobacterium violaceum (strain ATCC 12472 / DSM 30191 / JCM 1249 / CCUG 213 / NBRC 12614 / NCIMB 9131 / NCTC 9757 / MK).